Here is a 149-residue protein sequence, read N- to C-terminus: SsrA-binding protein (149 aa).

It belongs to the SmpB family.

It localises to the cytoplasm. In terms of biological role, required for rescue of stalled ribosomes mediated by trans-translation. Binds to transfer-messenger RNA (tmRNA), required for stable association of tmRNA with ribosomes. tmRNA and SmpB together mimic tRNA shape, replacing the anticodon stem-loop with SmpB. tmRNA is encoded by the ssrA gene; the 2 termini fold to resemble tRNA(Ala) and it encodes a 'tag peptide', a short internal open reading frame. During trans-translation Ala-aminoacylated tmRNA acts like a tRNA, entering the A-site of stalled ribosomes, displacing the stalled mRNA. The ribosome then switches to translate the ORF on the tmRNA; the nascent peptide is terminated with the 'tag peptide' encoded by the tmRNA and targeted for degradation. The ribosome is freed to recommence translation, which seems to be the essential function of trans-translation. The sequence is that of SsrA-binding protein from Wolbachia pipientis wMel.